A 348-amino-acid chain; its full sequence is Autophagy-related protein 27 (348 aa).

The N-terminal stretch at Met1–Ser20 is a signal peptide. At Ala21–His274 the chain is on the lumenal side. In terms of domain architecture, MRH spans Leu24–Lys255. Cystine bridges form between Cys26–Cys69, Cys82–Cys89, and Cys175–Cys253. N-linked (GlcNAc...) asparagine glycans are attached at residues Asn61 and Asn84. Residues Glu180–Gly208 show a composition bias toward basic and acidic residues. Residues Glu180–Glu219 are disordered. N-linked (GlcNAc...) asparagine glycosylation is found at Asn226 and Asn270. Residues Trp275–Phe295 form a helical membrane-spanning segment. Residues Ser296–Val348 are Cytoplasmic-facing.

This sequence belongs to the ATG27 family. Forms a complex with ATG9 and ATG23.

The protein resides in the cytoplasmic vesicle membrane. It localises to the golgi apparatus membrane. The protein localises to the mitochondrion membrane. It is found in the preautophagosomal structure membrane. In terms of biological role, effector of VPS34 phosphatidylinositol 3-phosphate kinase signaling. Regulates the cytoplasm to vacuole transport (Cvt) vesicle formation. Plays a role in ATG protein retrieval from the pre-autophagosomal structure (PAS) and is especially required for autophagy-dependent cycling of ATG9. Autophagy is required for proper vegetative growth, asexual/sexual reproduction, and full virulence. Autophagy is particularly involved in the biosynthesis of deoxynivalenol (DON), an important virulence determinant. In Gibberella zeae (strain ATCC MYA-4620 / CBS 123657 / FGSC 9075 / NRRL 31084 / PH-1) (Wheat head blight fungus), this protein is Autophagy-related protein 27.